The following is a 146-amino-acid chain: Large ribosomal subunit protein uL15 (146 aa).

Positions 1–51 are disordered; sequence MKLHELQPAAGSRKVRNRVGRGTSSGNGKTAGRGQKGQKARSGGGVRLGFE. Composition is skewed to gly residues over residues 23-35 and 42-51; these read TSSG…GRGQ and SGGGVRLGFE.

Belongs to the universal ribosomal protein uL15 family. Part of the 50S ribosomal subunit.

In terms of biological role, binds to the 23S rRNA. This is Large ribosomal subunit protein uL15 from Streptococcus gordonii (strain Challis / ATCC 35105 / BCRC 15272 / CH1 / DL1 / V288).